We begin with the raw amino-acid sequence, 878 residues long: Alanine--tRNA ligase (878 aa).

Zn(2+) is bound by residues His-567, His-571, Cys-669, and His-673.

Belongs to the class-II aminoacyl-tRNA synthetase family. It depends on Zn(2+) as a cofactor.

It is found in the cytoplasm. It carries out the reaction tRNA(Ala) + L-alanine + ATP = L-alanyl-tRNA(Ala) + AMP + diphosphate. Functionally, catalyzes the attachment of alanine to tRNA(Ala) in a two-step reaction: alanine is first activated by ATP to form Ala-AMP and then transferred to the acceptor end of tRNA(Ala). Also edits incorrectly charged Ser-tRNA(Ala) and Gly-tRNA(Ala) via its editing domain. The protein is Alanine--tRNA ligase of Rickettsia akari (strain Hartford).